The primary structure comprises 156 residues: Endogenous retrovirus group K member 7 Pro protein (156 aa).

The region spanning 21-96 (FEGLVDTGAD…IPLNLWGRDL (76 aa)) is the Peptidase A2 domain. Aspartate 26 is a catalytic residue. In terms of domain architecture, G-patch spans 111-156 (YSPTSQKIMTKMGYIPGKGLGKNEDGIKVPVEAKINQEREGIGYPF).

This sequence belongs to the peptidase A2 family. HERV class-II K(HML-2) subfamily. In terms of assembly, active as a homodimer. In terms of processing, autoproteolytically processed at the N-terminus. Expected C-terminal autoprocessing not detected. The sequence shown is that of the processed Pro protein.

It catalyses the reaction Processing at the authentic HIV-1 PR recognition site and release of the mature p17 matrix and the p24 capsid protein, as a result of the cleavage of the -SQNY-|-PIVQ- cleavage site.. Functionally, retroviral proteases have roles in processing of the primary translation products and the maturation of the viral particle. Endogenous Pro proteins may have kept, lost or modified their original function during evolution. This endogenous protein has retained most of the characteristics of retroviral proteases. The chain is Endogenous retrovirus group K member 7 Pro protein (ERVK-7) from Homo sapiens (Human).